Consider the following 286-residue polypeptide: Bifunctional protein FolD (286 aa).

Residues 166-168 (GAS) and Ile-232 each bind NADP(+).

Belongs to the tetrahydrofolate dehydrogenase/cyclohydrolase family. Homodimer.

It catalyses the reaction (6R)-5,10-methylene-5,6,7,8-tetrahydrofolate + NADP(+) = (6R)-5,10-methenyltetrahydrofolate + NADPH. It carries out the reaction (6R)-5,10-methenyltetrahydrofolate + H2O = (6R)-10-formyltetrahydrofolate + H(+). It functions in the pathway one-carbon metabolism; tetrahydrofolate interconversion. Catalyzes the oxidation of 5,10-methylenetetrahydrofolate to 5,10-methenyltetrahydrofolate and then the hydrolysis of 5,10-methenyltetrahydrofolate to 10-formyltetrahydrofolate. The protein is Bifunctional protein FolD of Shewanella woodyi (strain ATCC 51908 / MS32).